The sequence spans 501 residues: Tegument protein US24 (501 aa).

It belongs to the herpesviridae US22 family.

The protein resides in the virion tegument. The polypeptide is Tegument protein US24 (US24) (Human cytomegalovirus (strain AD169) (HHV-5)).